The chain runs to 124 residues: Small ribosomal subunit protein uS12 (124 aa).

The disordered stretch occupies residues 8–28; that stretch reads IRSAREKTDKKTKSPALKSCP. Over residues 10–19 the composition is skewed to basic and acidic residues; it reads SAREKTDKKT. D89 bears the 3-methylthioaspartic acid mark.

The protein belongs to the universal ribosomal protein uS12 family. Part of the 30S ribosomal subunit. Contacts proteins S8 and S17. May interact with IF1 in the 30S initiation complex.

In terms of biological role, with S4 and S5 plays an important role in translational accuracy. Interacts with and stabilizes bases of the 16S rRNA that are involved in tRNA selection in the A site and with the mRNA backbone. Located at the interface of the 30S and 50S subunits, it traverses the body of the 30S subunit contacting proteins on the other side and probably holding the rRNA structure together. The combined cluster of proteins S8, S12 and S17 appears to hold together the shoulder and platform of the 30S subunit. The chain is Small ribosomal subunit protein uS12 from Arthrospira platensis (Spirulina platensis).